Here is a 200-residue protein sequence, read N- to C-terminus: Lipopolysaccharide core heptose(II)-phosphate phosphatase (200 aa).

Residues 1-25 form the signal peptide; it reads MLAFCRSSLKSKKYFIILLALAAIA.

Belongs to the phosphoglycerate mutase family. Ais subfamily.

It localises to the periplasm. Its pathway is bacterial outer membrane biogenesis; lipopolysaccharide metabolism. In terms of biological role, catalyzes the dephosphorylation of heptose(II) of the outer membrane lipopolysaccharide core. In Escherichia coli (strain SE11), this protein is Lipopolysaccharide core heptose(II)-phosphate phosphatase.